Reading from the N-terminus, the 218-residue chain is Small ribosomal subunit protein uS3c (218 aa).

The KH type-2 domain occupies 47-118 (VQKNIRISSG…KLNIAITRIT (72 aa)).

It belongs to the universal ribosomal protein uS3 family. In terms of assembly, part of the 30S ribosomal subunit.

The protein localises to the plastid. It is found in the chloroplast. This is Small ribosomal subunit protein uS3c (rps3) from Vitis vinifera (Grape).